Here is a 274-residue protein sequence, read N- to C-terminus: Thiamine kinase (274 aa).

This sequence belongs to the thiamine kinase family.

The enzyme catalyses thiamine + ATP = thiamine phosphate + ADP + H(+). Its pathway is cofactor biosynthesis; thiamine diphosphate biosynthesis; thiamine phosphate from thiamine: step 1/1. Its function is as follows. Catalyzes the ATP-dependent phosphorylation of thiamine to thiamine phosphate. Is involved in thiamine salvage. This Salmonella newport (strain SL254) protein is Thiamine kinase.